The following is a 507-amino-acid chain: ATP synthase subunit alpha, chloroplastic (507 aa).

170–177 (GDRQTGKT) lines the ATP pocket.

It belongs to the ATPase alpha/beta chains family. As to quaternary structure, F-type ATPases have 2 components, CF(1) - the catalytic core - and CF(0) - the membrane proton channel. CF(1) has five subunits: alpha(3), beta(3), gamma(1), delta(1), epsilon(1). CF(0) has four main subunits: a, b, b' and c.

It is found in the plastid. The protein localises to the chloroplast thylakoid membrane. It carries out the reaction ATP + H2O + 4 H(+)(in) = ADP + phosphate + 5 H(+)(out). Functionally, produces ATP from ADP in the presence of a proton gradient across the membrane. The alpha chain is a regulatory subunit. The chain is ATP synthase subunit alpha, chloroplastic from Silene latifolia (White campion).